The chain runs to 159 residues: 3-dehydroquinate dehydratase (159 aa).

Tyrosine 22 (proton acceptor) is an active-site residue. Substrate contacts are provided by asparagine 73, histidine 79, and aspartate 86. Histidine 99 acts as the Proton donor in catalysis. Residues 100–101 (IS) and arginine 110 each bind substrate.

This sequence belongs to the type-II 3-dehydroquinase family. As to quaternary structure, homododecamer.

The catalysed reaction is 3-dehydroquinate = 3-dehydroshikimate + H2O. It functions in the pathway metabolic intermediate biosynthesis; chorismate biosynthesis; chorismate from D-erythrose 4-phosphate and phosphoenolpyruvate: step 3/7. Functionally, catalyzes a trans-dehydration via an enolate intermediate. This Campylobacter jejuni subsp. jejuni serotype O:6 (strain 81116 / NCTC 11828) protein is 3-dehydroquinate dehydratase.